The primary structure comprises 263 residues: Ribosomal RNA large subunit methyltransferase E (263 aa).

The tract at residues 1 to 34 is disordered; the sequence is MSSAEGPKSGGGSKGSKSEASSRVRGSAPTGSRD. Residues glycine 102, tryptophan 104, aspartate 126, aspartate 142, and aspartate 166 each coordinate S-adenosyl-L-methionine. Lysine 206 serves as the catalytic Proton acceptor.

The protein belongs to the class I-like SAM-binding methyltransferase superfamily. RNA methyltransferase RlmE family.

It is found in the cytoplasm. It carries out the reaction uridine(2552) in 23S rRNA + S-adenosyl-L-methionine = 2'-O-methyluridine(2552) in 23S rRNA + S-adenosyl-L-homocysteine + H(+). Its function is as follows. Specifically methylates the uridine in position 2552 of 23S rRNA at the 2'-O position of the ribose in the fully assembled 50S ribosomal subunit. This chain is Ribosomal RNA large subunit methyltransferase E, found in Rhodospirillum rubrum (strain ATCC 11170 / ATH 1.1.1 / DSM 467 / LMG 4362 / NCIMB 8255 / S1).